Reading from the N-terminus, the 298-residue chain is Tyrosine recombinase XerD (298 aa).

The region spanning 3 to 88 (ALDHPLIDQF…GLRGFFRYLL (86 aa)) is the Core-binding (CB) domain. In terms of domain architecture, Tyr recombinase spans 109–292 (PLPKSLSEAD…AKARLQQLHA (184 aa)). Residues arginine 149, lysine 173, histidine 244, arginine 247, and histidine 270 contribute to the active site. The O-(3'-phospho-DNA)-tyrosine intermediate role is filled by tyrosine 279.

It belongs to the 'phage' integrase family. XerD subfamily. As to quaternary structure, forms a cyclic heterotetrameric complex composed of two molecules of XerC and two molecules of XerD.

It localises to the cytoplasm. Functionally, site-specific tyrosine recombinase, which acts by catalyzing the cutting and rejoining of the recombining DNA molecules. The XerC-XerD complex is essential to convert dimers of the bacterial chromosome into monomers to permit their segregation at cell division. It also contributes to the segregational stability of plasmids. This Pseudomonas putida (strain ATCC 47054 / DSM 6125 / CFBP 8728 / NCIMB 11950 / KT2440) protein is Tyrosine recombinase XerD.